Consider the following 75-residue polypeptide: MARQLFKRKKFCRFTAEGIKEIDYKSVDLLKDFIAENGKIIPARITGTKARYQRQLTTAIKRARFLAFLPYTDQH.

This sequence belongs to the bacterial ribosomal protein bS18 family. In terms of assembly, part of the 30S ribosomal subunit. Forms a tight heterodimer with protein bS6.

Functionally, binds as a heterodimer with protein bS6 to the central domain of the 16S rRNA, where it helps stabilize the platform of the 30S subunit. The protein is Small ribosomal subunit protein bS18 of Chromobacterium violaceum (strain ATCC 12472 / DSM 30191 / JCM 1249 / CCUG 213 / NBRC 12614 / NCIMB 9131 / NCTC 9757 / MK).